The following is a 359-amino-acid chain: Glycerol-3-phosphate dehydrogenase [NAD(P)+] (359 aa).

Residues Thr11, Trp12, Arg32, and Lys107 each contribute to the NADPH site. Positions 107 and 138 each coordinate sn-glycerol 3-phosphate. An NADPH-binding site is contributed by Ala142. The sn-glycerol 3-phosphate site is built by Lys193, Asp246, Ser256, Arg257, and Asn258. Lys193 functions as the Proton acceptor in the catalytic mechanism. Position 257 (Arg257) interacts with NADPH. Val281 and Glu283 together coordinate NADPH.

The protein belongs to the NAD-dependent glycerol-3-phosphate dehydrogenase family.

It is found in the cytoplasm. The catalysed reaction is sn-glycerol 3-phosphate + NAD(+) = dihydroxyacetone phosphate + NADH + H(+). It carries out the reaction sn-glycerol 3-phosphate + NADP(+) = dihydroxyacetone phosphate + NADPH + H(+). The protein operates within membrane lipid metabolism; glycerophospholipid metabolism. In terms of biological role, catalyzes the reduction of the glycolytic intermediate dihydroxyacetone phosphate (DHAP) to sn-glycerol 3-phosphate (G3P), the key precursor for phospholipid synthesis. The protein is Glycerol-3-phosphate dehydrogenase [NAD(P)+] of Dehalococcoides mccartyi (strain ATCC BAA-2266 / KCTC 15142 / 195) (Dehalococcoides ethenogenes (strain 195)).